The primary structure comprises 128 residues: Ribosome-binding factor A (128 aa).

It belongs to the RbfA family. Monomer. Binds 30S ribosomal subunits, but not 50S ribosomal subunits or 70S ribosomes.

It is found in the cytoplasm. One of several proteins that assist in the late maturation steps of the functional core of the 30S ribosomal subunit. Associates with free 30S ribosomal subunits (but not with 30S subunits that are part of 70S ribosomes or polysomes). Required for efficient processing of 16S rRNA. May interact with the 5'-terminal helix region of 16S rRNA. This Saccharophagus degradans (strain 2-40 / ATCC 43961 / DSM 17024) protein is Ribosome-binding factor A.